Here is a 146-residue protein sequence, read N- to C-terminus: MKINKDIRTFIDNKQIPSVKTSEITASFKTSMENQSSKMKLDQLTRLLSDIEAFGKRLTKSRNFKDLARFKGLVKRFVKEAVDSGLSHETSKSFDLYGNSRTLGLVKEIDDKLIQLTEEMMDQEKPAIDLLERIGEIKGLLINLYT.

This is an uncharacterized protein from Bacillus subtilis (strain 168).